A 341-amino-acid chain; its full sequence is uncharacterized protein (341 aa).

Positions 125-146 (DTVKHNGSGPRPEQASSHVHYS) are disordered.

It belongs to the cycloisomerase 2 family.

This is an uncharacterized protein from Lactococcus lactis subsp. cremoris (strain MG1363).